The sequence spans 74 residues: uncharacterized protein (74 aa).

Positions 1 to 19 (MIGLIVVPILFAIKGIVVG) are cleaved as a signal peptide. A disordered region spans residues 26-74 (KFGKHSNTKDQKEDKDEDKRQSISQRKQHTEWPIEENRIQRRAPNQSAL). Basic and acidic residues-rich tracts occupy residues 32–46 (NTKD…DKRQ) and 53–64 (QHTEWPIEENRI).

This is an uncharacterized protein from Saccharomyces cerevisiae (strain ATCC 204508 / S288c) (Baker's yeast).